Reading from the N-terminus, the 280-residue chain is Pantothenate synthetase (280 aa).

32–39 (MGALHAGH) is an ATP binding site. The active-site Proton donor is H39. Q63 contributes to the (R)-pantoate binding site. Q63 is a binding site for beta-alanine. 149–152 (GEKD) provides a ligand contact to ATP. Q155 is a binding site for (R)-pantoate. Residues V178 and 186–189 (MSSR) each bind ATP.

Belongs to the pantothenate synthetase family. In terms of assembly, homodimer.

The protein resides in the cytoplasm. The enzyme catalyses (R)-pantoate + beta-alanine + ATP = (R)-pantothenate + AMP + diphosphate + H(+). Its pathway is cofactor biosynthesis; (R)-pantothenate biosynthesis; (R)-pantothenate from (R)-pantoate and beta-alanine: step 1/1. Catalyzes the condensation of pantoate with beta-alanine in an ATP-dependent reaction via a pantoyl-adenylate intermediate. In Ruegeria sp. (strain TM1040) (Silicibacter sp.), this protein is Pantothenate synthetase.